Consider the following 359-residue polypeptide: Peptide chain release factor 1 (359 aa).

The residue at position 235 (Gln-235) is an N5-methylglutamine.

Belongs to the prokaryotic/mitochondrial release factor family. Post-translationally, methylated by PrmC. Methylation increases the termination efficiency of RF1.

The protein resides in the cytoplasm. Functionally, peptide chain release factor 1 directs the termination of translation in response to the peptide chain termination codons UAG and UAA. This is Peptide chain release factor 1 from Polynucleobacter necessarius subsp. necessarius (strain STIR1).